Here is a 244-residue protein sequence, read N- to C-terminus: Prolactin-7D1 (244 aa).

The signal sequence occupies residues 1-30 (MLPSLIQPCSSGTLLMLLMSNLFLWEKVSS). 2 cysteine pairs are disulfide-bonded: cysteine 99/cysteine 215 and cysteine 232/cysteine 240.

This sequence belongs to the somatotropin/prolactin family.

The protein localises to the secreted. The polypeptide is Prolactin-7D1 (Prl7d1) (Mus musculus (Mouse)).